The sequence spans 315 residues: Jacalin-related lectin 10 (315 aa).

A signal peptide spans 1–23; sequence MVIIYIFLFLSSAIIDSTGLAKA. Jacalin-type lectin domains lie at 24-165 and 168-312; these read QKLD…YLTT and PTKS…YFSP.

It belongs to the jacalin lectin family.

This chain is Jacalin-related lectin 10 (JAL10), found in Arabidopsis thaliana (Mouse-ear cress).